The following is a 127-amino-acid chain: Ribonuclease P protein component 1 (127 aa).

It belongs to the eukaryotic/archaeal RNase P protein component 1 family. As to quaternary structure, consists of a catalytic RNA component and at least 4 protein subunits. Forms a subcomplex with Rnp4 which stimulates the catalytic RNA.

Its subcellular location is the cytoplasm. The catalysed reaction is Endonucleolytic cleavage of RNA, removing 5'-extranucleotides from tRNA precursor.. Its function is as follows. Part of ribonuclease P, a protein complex that generates mature tRNA molecules by cleaving their 5'-ends. The RNA is catalytic, but its KM for pre-tRNA is 170-fold decreased in the presence of the 4 known protein subunits (Rnp1-4). The protein subunits also decrease the amount of Mg(2+) needed for activity. The protein is Ribonuclease P protein component 1 of Pyrococcus furiosus (strain ATCC 43587 / DSM 3638 / JCM 8422 / Vc1).